A 158-amino-acid chain; its full sequence is MLNQLDNLTERVRGSNKLVDRWLHVRKHLLVAYYNLVGIKPGKESYMRLNEKALDDFCQSLVDYLSAGHFSIYERILHKLEGNGQLARAAKIWPQLEANTQQIMDYYDSSLETAIDHDNYLEFQKVLSDIGEALEARFVLEDKLILLVLDAARVKHPA.

Belongs to the Rsd/AlgQ family. In terms of assembly, interacts with RpoD.

It localises to the cytoplasm. Its function is as follows. Binds RpoD and negatively regulates RpoD-mediated transcription activation by preventing the interaction between the primary sigma factor RpoD with the catalytic core of the RNA polymerase and with promoter DNA. May be involved in replacement of the RNA polymerase sigma subunit from RpoD to RpoS during the transition from exponential growth to the stationary phase. This chain is Regulator of sigma D, found in Shigella boydii serotype 4 (strain Sb227).